Reading from the N-terminus, the 297-residue chain is Nicotinate-nucleotide pyrophosphorylase [carboxylating] (297 aa).

Substrate is bound by residues Arg119, 152-154 (TRK), Arg176, Lys186, Glu215, Asp236, 259-261 (SGN), and 280-282 (VGA).

It belongs to the NadC/ModD family. As to quaternary structure, homodimer Hexamer formed by 3 homodimers. Homodimer.

The enzyme catalyses nicotinate beta-D-ribonucleotide + CO2 + diphosphate = quinolinate + 5-phospho-alpha-D-ribose 1-diphosphate + 2 H(+). It functions in the pathway cofactor biosynthesis; NAD(+) biosynthesis; nicotinate D-ribonucleotide from quinolinate: step 1/1. Its function is as follows. Involved in the catabolism of quinolinic acid (QA). In Escherichia coli (strain K12), this protein is Nicotinate-nucleotide pyrophosphorylase [carboxylating] (nadC).